We begin with the raw amino-acid sequence, 250 residues long: tRNA (guanine-N(1)-)-methyltransferase (250 aa).

Residues Gly-114 and 134–139 contribute to the S-adenosyl-L-methionine site; that span reads IGDYVL.

Belongs to the RNA methyltransferase TrmD family. Homodimer.

The protein localises to the cytoplasm. The enzyme catalyses guanosine(37) in tRNA + S-adenosyl-L-methionine = N(1)-methylguanosine(37) in tRNA + S-adenosyl-L-homocysteine + H(+). Its function is as follows. Specifically methylates guanosine-37 in various tRNAs. In Moorella thermoacetica (strain ATCC 39073 / JCM 9320), this protein is tRNA (guanine-N(1)-)-methyltransferase.